The following is a 156-amino-acid chain: SsrA-binding protein (156 aa).

This sequence belongs to the SmpB family.

The protein localises to the cytoplasm. Its function is as follows. Required for rescue of stalled ribosomes mediated by trans-translation. Binds to transfer-messenger RNA (tmRNA), required for stable association of tmRNA with ribosomes. tmRNA and SmpB together mimic tRNA shape, replacing the anticodon stem-loop with SmpB. tmRNA is encoded by the ssrA gene; the 2 termini fold to resemble tRNA(Ala) and it encodes a 'tag peptide', a short internal open reading frame. During trans-translation Ala-aminoacylated tmRNA acts like a tRNA, entering the A-site of stalled ribosomes, displacing the stalled mRNA. The ribosome then switches to translate the ORF on the tmRNA; the nascent peptide is terminated with the 'tag peptide' encoded by the tmRNA and targeted for degradation. The ribosome is freed to recommence translation, which seems to be the essential function of trans-translation. This chain is SsrA-binding protein, found in Trichodesmium erythraeum (strain IMS101).